The sequence spans 78 residues: Putative Fe(2+) transport protein A (78 aa).

Belongs to the FeoA family.

Might be involved in Fe(2+) ion uptake. The polypeptide is Putative Fe(2+) transport protein A (Helicobacter pylori (strain J99 / ATCC 700824) (Campylobacter pylori J99)).